The primary structure comprises 147 residues: uncharacterized protein (147 aa).

Over methionine 1–lysine 16 the chain is Extracellular. Residues valine 17 to isoleucine 37 form a helical membrane-spanning segment. Topologically, residues threonine 38–asparagine 105 are cytoplasmic. Residues glutamate 106 to serine 126 traverse the membrane as a helical segment. Over glutamate 127–asparagine 147 the chain is Extracellular.

It localises to the membrane. This is an uncharacterized protein from Saccharomyces cerevisiae (strain ATCC 204508 / S288c) (Baker's yeast).